The primary structure comprises 542 residues: MSGSNPAVSINKRKVAPVVLAILDGWGYREEIEHNAVRQASTPVIDALWHAYPHTLIEASGADVGLPDEQMGNSEVGHLTIGAGRIIQQELVRISNTVKENKLITNPALNQFSQSLKKGGGTLHIMGLCSDGGVHSHINHLCGLIEWAASKGLKSVSLHLFTDGRDTSAKSANKYINTIEAKIKSTGVGEISSLCGRYWAMDRDNRWERTSKAYELLTDPRFALSKLSAAESINKSYQEGITDEFIEPVRLSSSFLKDGDGVVFFNFRPDRARQLVKALKLKDFDGFERKNRADIDVLTFTQYESGLPVSVAFPPEPLNDLLGQVISDHGLNQYRTAETEKYPHVTYFLNGGIEKPLKGEVRHLVPSPRVATYDLQPEMSADELTDSCIKAIDSGIYSLVVINFANPDMVGHSGIMTAAIKANEKVDSCVGKLLNSIGKLGGSLLITADHGNSEMMIGPDGQPWTAHTTNPVPVILIEGEKRKLSGYGNDIKLRQSGGGLADLAPTLLHLLNLPKPKAMTGKTLIEPINLPKKPNLIPQPAY.

Mn(2+) contacts are provided by Asp24 and Ser74. The active-site Phosphoserine intermediate is the Ser74. Residues His135, 165 to 166 (RD), Arg197, Arg203, 268 to 271 (RPDR), and Lys341 each bind substrate. Mn(2+) is bound by residues Asp408, His412, Asp449, His450, and His467.

Belongs to the BPG-independent phosphoglycerate mutase family. Monomer. It depends on Mn(2+) as a cofactor.

It catalyses the reaction (2R)-2-phosphoglycerate = (2R)-3-phosphoglycerate. The protein operates within carbohydrate degradation; glycolysis; pyruvate from D-glyceraldehyde 3-phosphate: step 3/5. Catalyzes the interconversion of 2-phosphoglycerate and 3-phosphoglycerate. This chain is 2,3-bisphosphoglycerate-independent phosphoglycerate mutase, found in Prochlorococcus marinus (strain NATL1A).